Here is a 410-residue protein sequence, read N- to C-terminus: Tryptophan synthase beta chain (410 aa).

K98 bears the N6-(pyridoxal phosphate)lysine mark.

It belongs to the TrpB family. In terms of assembly, tetramer of two alpha and two beta chains. Pyridoxal 5'-phosphate is required as a cofactor.

It catalyses the reaction (1S,2R)-1-C-(indol-3-yl)glycerol 3-phosphate + L-serine = D-glyceraldehyde 3-phosphate + L-tryptophan + H2O. Its pathway is amino-acid biosynthesis; L-tryptophan biosynthesis; L-tryptophan from chorismate: step 5/5. In terms of biological role, the beta subunit is responsible for the synthesis of L-tryptophan from indole and L-serine. The chain is Tryptophan synthase beta chain from Dinoroseobacter shibae (strain DSM 16493 / NCIMB 14021 / DFL 12).